Consider the following 305-residue polypeptide: N-acetylmuramic acid 6-phosphate etherase (305 aa).

Residues methionine 1 to aspartate 24 are disordered. Residues aspartate 11–aspartate 24 show a composition bias toward basic and acidic residues. The SIS domain occupies alanine 62–lysine 225. Residue glutamate 90 is the Proton donor of the active site. Residue glutamate 121 is part of the active site.

Belongs to the GCKR-like family. MurNAc-6-P etherase subfamily. In terms of assembly, homodimer.

It carries out the reaction N-acetyl-D-muramate 6-phosphate + H2O = N-acetyl-D-glucosamine 6-phosphate + (R)-lactate. Its pathway is amino-sugar metabolism; N-acetylmuramate degradation. In terms of biological role, specifically catalyzes the cleavage of the D-lactyl ether substituent of MurNAc 6-phosphate, producing GlcNAc 6-phosphate and D-lactate. The sequence is that of N-acetylmuramic acid 6-phosphate etherase from Deinococcus geothermalis (strain DSM 11300 / CIP 105573 / AG-3a).